The chain runs to 516 residues: Bifunctional purine biosynthesis protein PurH (516 aa).

One can recognise an MGS-like domain in the interval 1-146; that stretch reads MAPFALLSVS…KNHADVAVLT (146 aa).

Belongs to the PurH family.

The catalysed reaction is (6R)-10-formyltetrahydrofolate + 5-amino-1-(5-phospho-beta-D-ribosyl)imidazole-4-carboxamide = 5-formamido-1-(5-phospho-D-ribosyl)imidazole-4-carboxamide + (6S)-5,6,7,8-tetrahydrofolate. It catalyses the reaction IMP + H2O = 5-formamido-1-(5-phospho-D-ribosyl)imidazole-4-carboxamide. The protein operates within purine metabolism; IMP biosynthesis via de novo pathway; 5-formamido-1-(5-phospho-D-ribosyl)imidazole-4-carboxamide from 5-amino-1-(5-phospho-D-ribosyl)imidazole-4-carboxamide (10-formyl THF route): step 1/1. It participates in purine metabolism; IMP biosynthesis via de novo pathway; IMP from 5-formamido-1-(5-phospho-D-ribosyl)imidazole-4-carboxamide: step 1/1. This is Bifunctional purine biosynthesis protein PurH from Parasynechococcus marenigrum (strain WH8102).